The chain runs to 358 residues: 4-hydroxy-3-methylbut-2-en-1-yl diphosphate synthase (flavodoxin) (358 aa).

Residues C270, C273, C305, and E312 each contribute to the [4Fe-4S] cluster site.

It belongs to the IspG family. Requires [4Fe-4S] cluster as cofactor.

It carries out the reaction (2E)-4-hydroxy-3-methylbut-2-enyl diphosphate + oxidized [flavodoxin] + H2O + 2 H(+) = 2-C-methyl-D-erythritol 2,4-cyclic diphosphate + reduced [flavodoxin]. Its pathway is isoprenoid biosynthesis; isopentenyl diphosphate biosynthesis via DXP pathway; isopentenyl diphosphate from 1-deoxy-D-xylulose 5-phosphate: step 5/6. Functionally, converts 2C-methyl-D-erythritol 2,4-cyclodiphosphate (ME-2,4cPP) into 1-hydroxy-2-methyl-2-(E)-butenyl 4-diphosphate. The protein is 4-hydroxy-3-methylbut-2-en-1-yl diphosphate synthase (flavodoxin) of Vesicomyosocius okutanii subsp. Calyptogena okutanii (strain HA).